Here is a 102-residue protein sequence, read N- to C-terminus: Small ribosomal subunit protein uS10 (102 aa).

This sequence belongs to the universal ribosomal protein uS10 family. As to quaternary structure, part of the 30S ribosomal subunit.

In terms of biological role, involved in the binding of tRNA to the ribosomes. This is Small ribosomal subunit protein uS10 from Nitrosospira multiformis (strain ATCC 25196 / NCIMB 11849 / C 71).